A 1042-amino-acid polypeptide reads, in one-letter code: SWI/SNF-related matrix-associated actin-dependent regulator of chromatin subfamily A member 1 (1042 aa).

The interval 25–82 is disordered; sequence EDEQPGPSTSQEEGAAAAATEATAATEKGEKKKEKNVSSFQLKLAAKAPKSEKEMDPE. A compositionally biased stretch (low complexity) spans 36-50; it reads EEGAAAAATEATAAT. 2 stretches are compositionally biased toward basic and acidic residues: residues 51-60 and 73-82; these read EKGEKKKEKN and PKSEKEMDPE. Phosphoserine is present on residues serine 116 and serine 119. Residues 195–360 enclose the Helicase ATP-binding domain; sequence ISLYENGVNG…WALLNFLLPD (166 aa). 208-215 provides a ligand contact to ATP; that stretch reads DEMGLGKT. The DEAH box signature appears at 311–314; that stretch reads DEAH. The Helicase C-terminal domain occupies 490–641; the sequence is VLDKLLAKLK…SIVIQQGRLI (152 aa). Residues lysine 650, lysine 716, and lysine 738 each participate in a glycyl lysine isopeptide (Lys-Gly) (interchain with G-Cter in SUMO2) cross-link. A disordered region spans residues 819–849; that stretch reads EQKKIDGAEPLTPEETEEKEKLLTQGFTNWT. The span at 828–837 shows a compositional bias: basic and acidic residues; sequence PLTPEETEEK. The region spanning 843-895 is the SANT 1 domain; it reads QGFTNWTKRDFNQFIKANEKYGRDDIDNIAREVEGKSPEEVMEYSAVFWERCN. Tyrosine 942 is subject to Phosphotyrosine. The SANT 2 domain occupies 946–1010; it reads KGKNYTEEED…QRRCNTLISL (65 aa).

Belongs to the SNF2/RAD54 helicase family. ISWI subfamily. In terms of assembly, may form homodimers. Component of the ACF-1 ISWI chromatin remodeling complex at least composed of SMARCA1 and BAZ1A, which regulates the spacing of histone octamers on the DNA template to facilitate access to DNA. Within the complex interacts with BAZ1A; the interaction is direct. Component of the WICH-1 ISWI chromatin remodeling complex at least composed of SMARCA1 and BAZ1B/WSTF. Within the complex interacts with BAZ1B/WSTF. Component of the NoRC-1 ISWI chromatin remodeling complex at least composed of SMARCA1 and BAZ2A/TIP5. Within the complex interacts with BAZ2A/TIP5. Component of the BRF-1 ISWI chromatin remodeling complex at least composed of SMARCA1 and BAZ2B. Within the complex interacts with BAZ2B. Component of the NURF-1 ISWI chromatin remodeling complex (also called the nucleosome-remodeling factor (NURF) complex) at least composed of SMARCA1, BPTF, RBBP4 and RBBP7. Within the complex interacts with BPTF. Within the complex interacts with RBBP4 and RBBP7. Component of the CERF-1 ISWI chromatin remodeling complex (also called the CECR2-containing-remodeling factor (CERF) complex) at least composed of CECR2 and SMARCA1. LUZP1 is detected as part of the CERF-1 complex in embryonic stem cells where it is involved in complex stabilization but is not detected in the complex in the testis. Component of the RSF-1 ISWI chromatin remodeling complex at least composed of SMARCA1 and RSF1. Within the complex interacts with RSF1. Interacts with PRLR. Interacts with ERCC6. As to quaternary structure, may form homodimers. Component of the BPFT-SMARCA1 complex at least composed of SMARCA1, BPFT, RBBP4 and RBBP7; the complex is catalytically inactive and does not remodel chromatin. Within the complex interacts with BPTF, RBBP4 and RBBP7. Component of the BAZ1A-1-SMARCA1 complex at least composed of SMARCA1 and BAZ1A; the complex is catalytically inactive and does not remodel chromatin. Component of the BAZ1B-1-SMARCA1 complex at least composed of SMARCA1 and BAZ1B; the complex is catalytically inactive and does not remodel chromatin. As to expression, expressed in lung, breast, kidney, ovary, skeletal muscle and brain. Mainly expressed in non-neuronal tissues such as lung, breast, kidney, and ovary.

The protein resides in the nucleus. It localises to the chromosome. It carries out the reaction ATP + H2O = ADP + phosphate + H(+). Its function is as follows. ATPase that possesses intrinsic ATP-dependent chromatin-remodeling activity. ATPase activity is substrate-dependent, and is increased when nucleosomes are the substrate, but is also catalytically active when DNA alone is the substrate. Catalytic subunit of ISWI chromatin-remodeling complexes, which form ordered nucleosome arrays on chromatin and facilitate access to DNA during DNA-templated processes such as DNA replication, transcription, and repair. Within the ISWI chromatin-remodeling complexes, slides edge- and center-positioned histone octamers away from their original location on the DNA template. Catalytic activity and histone octamer sliding propensity is regulated and determined by components of the ISWI chromatin-remodeling complexes. The BAZ1A-, BAZ1B-, BAZ2A- and BAZ2B-containing ISWI chromatin-remodeling complexes regulate the spacing of nucleosomes along the chromatin and have the ability to slide mononucleosomes to the center of a DNA template. The CECR2- and RSF1-containing ISWI chromatin-remodeling complexes do not have the ability to slide mononucleosomes to the center of a DNA template. Within the NURF-1 and CERF-1 ISWI chromatin remodeling complexes, nucleosomes are the preferred substrate for its ATPase activity. Within the NURF-1 ISWI chromatin-remodeling complex, binds to the promoters of En1 and En2 to positively regulate their expression and promote brain development. May promote neurite outgrowth. May be involved in the development of luteal cells. Facilitates nucleosome assembly during DNA replication, ensuring replication fork progression and genomic stability by preventing replication stress and nascent DNA gaps. In terms of biological role, catalytically inactive when either DNA or nucleosomes are the substrate and does not possess chromatin-remodeling activity. Acts as a negative regulator of chromatin remodelers by generating inactive complexes. The polypeptide is SWI/SNF-related matrix-associated actin-dependent regulator of chromatin subfamily A member 1 (Homo sapiens (Human)).